We begin with the raw amino-acid sequence, 244 residues long: Flagellar brake protein YcgR (244 aa).

The PilZ domain occupies 112-230 (QRRRYFRISA…ERQLQRIIFS (119 aa)).

It belongs to the YcgR family. Monomer. Interacts with MotA in the flagellar basal bodies. In another study it was not seen to interact with MotA, but instead with FliM and FliG, also in the flagellar basal body.

The protein resides in the bacterial flagellum basal body. Acts as a flagellar brake, regulating swimming and swarming in a bis-(3'-5') cyclic diguanylic acid (c-di-GMP)-dependent manner. When bound to c-di-GMP it binds to elements of the flagellar motor (MotA and/or FliG and FliM, binding to FliM also occurs in the absence of c-di-GMP), causing the motor to slow down. Thus, increasing levels of c-di-GMP lead to decreased motility. Probably binds 1 c-di-GMP dimer per subunit. This is Flagellar brake protein YcgR (ycgR) from Escherichia coli (strain K12).